We begin with the raw amino-acid sequence, 342 residues long: D-erythrose-4-phosphate dehydrogenase (342 aa).

12–13 (RI) is a binding site for NAD(+). Substrate is bound by residues 154–156 (SCT), Arg-200, 213–214 (TK), and Arg-236. Cys-155 functions as the Nucleophile in the catalytic mechanism. Asn-318 contacts NAD(+).

The protein belongs to the glyceraldehyde-3-phosphate dehydrogenase family. Epd subfamily. As to quaternary structure, homotetramer.

It localises to the cytoplasm. The enzyme catalyses D-erythrose 4-phosphate + NAD(+) + H2O = 4-phospho-D-erythronate + NADH + 2 H(+). The protein operates within cofactor biosynthesis; pyridoxine 5'-phosphate biosynthesis; pyridoxine 5'-phosphate from D-erythrose 4-phosphate: step 1/5. Its function is as follows. Catalyzes the NAD-dependent conversion of D-erythrose 4-phosphate to 4-phosphoerythronate. The protein is D-erythrose-4-phosphate dehydrogenase of Salmonella arizonae (strain ATCC BAA-731 / CDC346-86 / RSK2980).